The following is an 817-amino-acid chain: General transcription factor 3C polypeptide 4 (817 aa).

Met1 is subject to N-acetylmethionine. The tract at residues 1 to 40 is disordered; that stretch reads MSEADQALVGPKADEPSPPAEEKDEGGGKEAAADAAPGPS. Residue Lys221 forms a Glycyl lysine isopeptide (Lys-Gly) (interchain with G-Cter in SUMO2) linkage. A phosphoserine mark is found at Ser600 and Ser607. The disordered stretch occupies residues 603-658; it reads LLVDSPGMGDGEDEQQEEGTSKQGTKAGLQEKSKEGDTEETPEDSLTAGGDTGGRE. Lys624 is covalently cross-linked (Glycyl lysine isopeptide (Lys-Gly) (interchain with G-Cter in SUMO2)). A Phosphoserine modification is found at Ser647.

This sequence belongs to the TFIIIC subunit 4 family. Part of the TFIIIC subcomplex TFIIIC2, consisting of six subunits, GTF3C1, GTF3C2, GTF3C3, GTF3C4, GTF3C5 and GTF3C6. Interacts with BRF1, GTF3C1, GTF3C2, GTF3C5, GTF3C6, POLR3C and POLR3F.

It localises to the nucleus. It catalyses the reaction L-lysyl-[protein] + acetyl-CoA = N(6)-acetyl-L-lysyl-[protein] + CoA + H(+). Its function is as follows. Essential for RNA polymerase III to make a number of small nuclear and cytoplasmic RNAs, including 5S RNA, tRNA, and adenovirus-associated (VA) RNA of both cellular and viral origin. Has histone acetyltransferase activity (HAT) with unique specificity for free and nucleosomal H3. May cooperate with GTF3C5 in facilitating the recruitment of TFIIIB and RNA polymerase through direct interactions with BRF1, POLR3C and POLR3F. May be localized close to the A box. The sequence is that of General transcription factor 3C polypeptide 4 (Gtf3c4) from Mus musculus (Mouse).